A 274-amino-acid polypeptide reads, in one-letter code: Thiazole synthase (274 aa).

The active-site Schiff-base intermediate with DXP is the lysine 115. 1-deoxy-D-xylulose 5-phosphate-binding positions include glycine 176, 202–203 (AG), and 224–225 (NS).

Belongs to the ThiG family. Homotetramer. Forms heterodimers with either ThiH or ThiS.

The protein resides in the cytoplasm. The enzyme catalyses [ThiS sulfur-carrier protein]-C-terminal-Gly-aminoethanethioate + 2-iminoacetate + 1-deoxy-D-xylulose 5-phosphate = [ThiS sulfur-carrier protein]-C-terminal Gly-Gly + 2-[(2R,5Z)-2-carboxy-4-methylthiazol-5(2H)-ylidene]ethyl phosphate + 2 H2O + H(+). It participates in cofactor biosynthesis; thiamine diphosphate biosynthesis. Functionally, catalyzes the rearrangement of 1-deoxy-D-xylulose 5-phosphate (DXP) to produce the thiazole phosphate moiety of thiamine. Sulfur is provided by the thiocarboxylate moiety of the carrier protein ThiS. In vitro, sulfur can be provided by H(2)S. This is Thiazole synthase from Psychrobacter cryohalolentis (strain ATCC BAA-1226 / DSM 17306 / VKM B-2378 / K5).